Consider the following 115-residue polypeptide: Large ribosomal subunit protein bL19 (115 aa).

Belongs to the bacterial ribosomal protein bL19 family.

In terms of biological role, this protein is located at the 30S-50S ribosomal subunit interface and may play a role in the structure and function of the aminoacyl-tRNA binding site. This Nitratidesulfovibrio vulgaris (strain DSM 19637 / Miyazaki F) (Desulfovibrio vulgaris) protein is Large ribosomal subunit protein bL19.